Consider the following 434-residue polypeptide: Glutamyl-tRNA reductase (434 aa).

Substrate-binding positions include 52 to 55, Ser-115, 120 to 122, and Gln-126; these read TCNR and ETQ. Cys-53 functions as the Nucleophile in the catalytic mechanism. Residue 195-200 coordinates NADP(+); that stretch reads GAGEMI.

Belongs to the glutamyl-tRNA reductase family. Homodimer.

The enzyme catalyses (S)-4-amino-5-oxopentanoate + tRNA(Glu) + NADP(+) = L-glutamyl-tRNA(Glu) + NADPH + H(+). Its pathway is porphyrin-containing compound metabolism; protoporphyrin-IX biosynthesis; 5-aminolevulinate from L-glutamyl-tRNA(Glu): step 1/2. Its function is as follows. Catalyzes the NADPH-dependent reduction of glutamyl-tRNA(Glu) to glutamate 1-semialdehyde (GSA). This is Glutamyl-tRNA reductase from Cupriavidus metallidurans (strain ATCC 43123 / DSM 2839 / NBRC 102507 / CH34) (Ralstonia metallidurans).